A 185-amino-acid chain; its full sequence is Peptidyl-tRNA hydrolase (185 aa).

Tyr14 provides a ligand contact to tRNA. The active-site Proton acceptor is His19. 3 residues coordinate tRNA: Tyr64, Asn66, and Asn112.

Belongs to the PTH family. As to quaternary structure, monomer.

Its subcellular location is the cytoplasm. The enzyme catalyses an N-acyl-L-alpha-aminoacyl-tRNA + H2O = an N-acyl-L-amino acid + a tRNA + H(+). Its function is as follows. Hydrolyzes ribosome-free peptidyl-tRNAs (with 1 or more amino acids incorporated), which drop off the ribosome during protein synthesis, or as a result of ribosome stalling. Catalyzes the release of premature peptidyl moieties from peptidyl-tRNA molecules trapped in stalled 50S ribosomal subunits, and thus maintains levels of free tRNAs and 50S ribosomes. The protein is Peptidyl-tRNA hydrolase of Lactobacillus helveticus (strain DPC 4571).